The chain runs to 205 residues: LexA repressor (205 aa).

Positions 28–48 (RAEIAASLGFRSPNAAEEHLK) form a DNA-binding region, H-T-H motif. Residues serine 122 and lysine 159 each act as for autocatalytic cleavage activity in the active site.

It belongs to the peptidase S24 family. As to quaternary structure, homodimer.

The enzyme catalyses Hydrolysis of Ala-|-Gly bond in repressor LexA.. In terms of biological role, represses a number of genes involved in the response to DNA damage (SOS response), including recA and lexA. Binds to the 16 bp palindromic sequence 5'-CTGTATATATATACAG-3'. In the presence of single-stranded DNA, RecA interacts with LexA causing an autocatalytic cleavage which disrupts the DNA-binding part of LexA, leading to derepression of the SOS regulon and eventually DNA repair. This chain is LexA repressor, found in Providencia rettgeri.